Consider the following 511-residue polypeptide: Protein phosphatase 2C 7 (511 aa).

The N-terminal stretch at 1 to 19 (MEEISPAVALTLGLANTMC) is a signal peptide. In terms of domain architecture, PPM-type phosphatase spans 188 to 501 (LWGTISICGG…DNISIIVIDL (314 aa)). 4 residues coordinate Mn(2+): Asp-242, Gly-243, Asp-432, and Asp-492.

Belongs to the PP2C family. Interacts with PYL13. Requires Mg(2+) as cofactor. The cofactor is Mn(2+). As to expression, expressed in seeds.

It carries out the reaction O-phospho-L-seryl-[protein] + H2O = L-seryl-[protein] + phosphate. The enzyme catalyses O-phospho-L-threonyl-[protein] + H2O = L-threonyl-[protein] + phosphate. Key component and repressor of the abscisic acid (ABA) signaling pathway that regulates numerous ABA responses, such as stomatal closure, seed germination and inhibition of vegetative growth. The chain is Protein phosphatase 2C 7 (HAB2) from Arabidopsis thaliana (Mouse-ear cress).